Here is a 101-residue protein sequence, read N- to C-terminus: Small ribosomal subunit protein bS18c (101 aa).

The protein belongs to the bacterial ribosomal protein bS18 family. As to quaternary structure, part of the 30S ribosomal subunit.

Its subcellular location is the plastid. The protein localises to the chloroplast. This Aethionema grandiflorum (Persian stone-cress) protein is Small ribosomal subunit protein bS18c.